Reading from the N-terminus, the 211-residue chain is RING finger protein 222 (211 aa).

Residues 14-65 (CPVCYEKFRDLDGASRTLSCGHVFCHDCLVKYLLSTRVDGQVQRTIVCPICR) form an RING-type zinc finger. A helical transmembrane segment spans residues 187-207 (LITLIAVVAVVAAILPWVLLV).

The protein localises to the membrane. This is RING finger protein 222 (Rnf222) from Mus musculus (Mouse).